The primary structure comprises 232 residues: MGQKVHPNGIRLGIVKPWNSTWFANTKEFADNLDSDFKVRQFLTKELAKASVSRIVIERPAKSIRVTIHTARPGIVIGKKGEDVEKLRKVVADIAGVPAQINIAEVRKPELDAKLVADSITSQLERRVMFRRAMKRAVQNAMRLGAKGIKVEVSGRLGGAEIARTEWYREGRVPLHTLRADIDYNTSEAHTTYGVIGVKVWIFKGEILGGMAAVEQPEPAAQPKKQQRKGRK.

The 69-residue stretch at 39-107 (VRQFLTKELA…PAQINIAEVR (69 aa)) folds into the KH type-2 domain.

The protein belongs to the universal ribosomal protein uS3 family. Part of the 30S ribosomal subunit. Forms a tight complex with proteins S10 and S14.

Binds the lower part of the 30S subunit head. Binds mRNA in the 70S ribosome, positioning it for translation. This is Small ribosomal subunit protein uS3 from Erwinia tasmaniensis (strain DSM 17950 / CFBP 7177 / CIP 109463 / NCPPB 4357 / Et1/99).